The sequence spans 421 residues: Ribulose bisphosphate carboxylase large chain (421 aa).

Substrate-binding residues include Asn68 and Thr118. Lys120 functions as the Proton acceptor in the catalytic mechanism. Lys122 lines the substrate pocket. Lys146, Asp148, and Glu149 together coordinate Mg(2+). N6-carboxylysine is present on Lys146. Catalysis depends on His239, which acts as the Proton acceptor. 3 residues coordinate substrate: Arg240, His272, and Ser324.

It belongs to the RuBisCO large chain family. Type I subfamily. Heterohexadecamer of 8 large chains and 8 small chains; disulfide-linked. The disulfide link is formed within the large subunit homodimers. Mg(2+) is required as a cofactor. In terms of processing, the disulfide bond which can form in the large chain dimeric partners within the hexadecamer appears to be associated with oxidative stress and protein turnover.

The protein localises to the plastid. Its subcellular location is the chloroplast. The enzyme catalyses 2 (2R)-3-phosphoglycerate + 2 H(+) = D-ribulose 1,5-bisphosphate + CO2 + H2O. It catalyses the reaction D-ribulose 1,5-bisphosphate + O2 = 2-phosphoglycolate + (2R)-3-phosphoglycerate + 2 H(+). In terms of biological role, ruBisCO catalyzes two reactions: the carboxylation of D-ribulose 1,5-bisphosphate, the primary event in carbon dioxide fixation, as well as the oxidative fragmentation of the pentose substrate in the photorespiration process. Both reactions occur simultaneously and in competition at the same active site. The chain is Ribulose bisphosphate carboxylase large chain (rbcL) from Aegilops crassa (Persian goatgrass).